Here is a 104-residue protein sequence, read N- to C-terminus: uncharacterized protein (104 aa).

2 helical membrane passes run 16-36 (LAFFYIIDGAIIALMLVLASY) and 44-64 (GGFGRIMFYVLFGTFGLFLCI).

Its subcellular location is the cell membrane. This is an uncharacterized protein from Bacillus anthracis.